Consider the following 338-residue polypeptide: Citramalyl-CoA lyase, mitochondrial (338 aa).

The transit peptide at 1–20 directs the protein to the mitochondrion; that stretch reads MALCVLQNAVRGAAALPRLK. Tyr48, Lys55, and Lys59 together coordinate substrate. An N6-acetyllysine mark is found at Lys55, Lys59, and Lys64. N6-acetyllysine; alternate occurs at positions 80 and 90. Residues Lys80 and Lys90 each carry the N6-succinyllysine; alternate modification. Residue Arg105 coordinates substrate. Residues Glu169 and Asp204 each coordinate Mg(2+). 270–271 is a substrate binding site; the sequence is IH. Lys307 is modified (N6-succinyllysine). Asp318 is an active-site residue.

The protein belongs to the HpcH/HpaI aldolase family. Citrate lyase beta subunit-like subfamily. As to quaternary structure, homotrimer. It depends on Mg(2+) as a cofactor.

It localises to the mitochondrion. It carries out the reaction glyoxylate + acetyl-CoA + H2O = (S)-malate + CoA + H(+). It catalyses the reaction propanoyl-CoA + glyoxylate + H2O = 3-methylmalate + CoA + H(+). The enzyme catalyses (3S)-citramalyl-CoA = pyruvate + acetyl-CoA. The catalysed reaction is (S)-malyl-CoA + H2O = (S)-malate + CoA + H(+). Mitochondrial citramalyl-CoA lyase indirectly involved in the vitamin B12 metabolism. Converts citramalyl-CoA into acetyl-CoA and pyruvate in the C5-dicarboxylate catabolism pathway. The C5-dicarboxylate catabolism pathway is required to detoxify itaconate, a vitamin B12-poisoning metabolite. Also acts as a malate synthase in vitro, converting glyoxylate and acetyl-CoA to malate. Also displays malyl-CoA thioesterase activity. Also acts as a beta-methylmalate synthase in vitro, by mediating conversion of glyoxylate and propionyl-CoA to beta-methylmalate. Also has very weak citramalate synthase activity in vitro. The polypeptide is Citramalyl-CoA lyase, mitochondrial (Clybl) (Rattus norvegicus (Rat)).